Reading from the N-terminus, the 637-residue chain is Biosynthetic arginine decarboxylase (637 aa).

Lysine 110 carries the post-translational modification N6-(pyridoxal phosphate)lysine. 290–300 lines the substrate pocket; it reads IDVGGGLGVDY.

This sequence belongs to the Orn/Lys/Arg decarboxylase class-II family. SpeA subfamily. Mg(2+) is required as a cofactor. The cofactor is pyridoxal 5'-phosphate.

It catalyses the reaction L-arginine + H(+) = agmatine + CO2. Functionally, catalyzes the biosynthesis of agmatine from arginine. This chain is Biosynthetic arginine decarboxylase, found in Pseudomonas putida (strain ATCC 47054 / DSM 6125 / CFBP 8728 / NCIMB 11950 / KT2440).